We begin with the raw amino-acid sequence, 501 residues long: Actin nucleation-promoting factor WASL (501 aa).

The residue at position 2 (Ser-2) is an N-acetylserine. The WH1 domain occupies 31–138 (LGKKCVTMSS…KAVTDLLGRR (108 aa)). Disordered stretches follow at residues 135 to 158 (LGRRQRKSEKRRDAPNGPNLPMAT) and 180 to 202 (SHTKEKKKGKAKKKRLTKADIGT). The segment covering 183 to 195 (KEKKKGKAKKKRL) has biased composition (basic residues). A CRIB domain is found at 200–213 (IGTPSNFQHIGHVG). Ser-239 bears the Phosphoserine; by TNK2 mark. Tyr-253 carries the post-translational modification Phosphotyrosine; by FAK1 and TNK2. 2 disordered regions span residues 263 to 405 (EAVK…KAAL) and 442 to 501 (QLKS…EWED). Composition is skewed to pro residues over residues 273 to 361 (APPP…PPPL) and 368 to 387 (APPPPPPPPPPPGPPPPPGL). Arg-304 is modified (omega-N-methylarginine). WH2 domains lie at 401–418 (NKAALLDQIREGAQLKKV) and 429–446 (GRDALLDQIRQGIQLKSV). A compositionally biased stretch (polar residues) spans 442–453 (QLKSVSDGQEST). 2 positions are modified to phosphoserine: Ser-480 and Ser-481. A compositionally biased stretch (acidic residues) spans 482 to 501 (DEDEDDDDEEDFQDDDEWED).

As to quaternary structure, binds actin and the Arp2/3 complex. Interacts with CDC42. Interacts with FCHSD1. Interacts with FCHSD2. Binds to SH3 domains of GRB2. Interacts with the C-terminal SH3 domain of DNMBP. Interacts with SNX9. Interacts with the WW domains of PRPF40A/FBP11. Interacts with PTK2/FAK1. Interacts with PACSIN1, PACSIN2 and PACSIN3. Interacts with NOSTRIN. Binds to TNK2. Interacts with SNX33. Interacts with NONO (via second RRM domain); the interaction is direct. Component of a multiprotein complex with NONO and SFPQ; associates with the complex via direct interaction with NONO. Post-translationally, phosphorylation at Ser-239, Tyr-253, Ser-480 and Ser-481 enhances actin polymerization activity.

Its subcellular location is the cytoplasm. It is found in the cytoskeleton. The protein localises to the nucleus. Regulates actin polymerization by stimulating the actin-nucleating activity of the Arp2/3 complex. Involved in various processes, such as mitosis and cytokinesis, via its role in the regulation of actin polymerization. Together with CDC42, involved in the extension and maintenance of the formation of thin, actin-rich surface projections called filopodia. In addition to its role in the cytoplasm, also plays a role in the nucleus by regulating gene transcription, probably by promoting nuclear actin polymerization. Binds to HSF1/HSTF1 and forms a complex on heat shock promoter elements (HSE) that negatively regulates HSP90 expression. Plays a role in dendrite spine morphogenesis. The chain is Actin nucleation-promoting factor WASL (Wasl) from Rattus norvegicus (Rat).